A 334-amino-acid chain; its full sequence is N-acetylmuramate/N-acetylglucosamine kinase (334 aa).

The protein belongs to the kinase AmgK family.

It catalyses the reaction N-acetyl-D-muramate + ATP = N-acetyl-alpha-D-muramate 1-phosphate + ADP + H(+). The enzyme catalyses N-acetyl-D-glucosamine + ATP = N-acetyl-alpha-D-glucosamine 1-phosphate + ADP + H(+). The protein operates within cell wall biogenesis; peptidoglycan recycling. Its function is as follows. Sugar kinase that catalyzes the ATP-dependent phosphorylation of N-acetylmuramate (MurNAc) and N-acetylglucosamine (GlcNAc) at its C1 hydroxyl group, leading to MurNAc alpha-1P and GlcNAc alpha-1P, respectively. Is likely involved in peptidoglycan recycling as part of a cell wall recycling pathway that bypasses de novo biosynthesis of the peptidoglycan precursor UDP-MurNAc. Is able to complement the fosfomycin sensitivity phenotype of a P.putida mutant lacking amgK. This is N-acetylmuramate/N-acetylglucosamine kinase from Neisseria meningitidis serogroup B (strain ATCC BAA-335 / MC58).